The chain runs to 24 residues: Conotoxin PIVE (24 aa).

Cystine bridges form between C2/C10, C3/C15, and C13/C19. K24 carries the lysine amide modification.

The protein belongs to the conotoxin A superfamily. In terms of tissue distribution, expressed by the venom duct.

Its subcellular location is the secreted. Probable neurotoxin with ion channel inhibitor activity. In vivo, elicits dose-dependently excitatory activity upon injection into fish. Its action is slowly reversible. This Conus purpurascens (Purple cone) protein is Conotoxin PIVE.